We begin with the raw amino-acid sequence, 331 residues long: Glycerophosphodiester phosphodiesterase 1 (331 aa).

At 1–3 (MWL) the chain is on the cytoplasmic side. The chain crosses the membrane as a helical span at residues 4-24 (WEDQGGLLGPFSFVLVLLLVV). Over 25-248 (TRSPFNACVL…PRYSVFWKQS (224 aa)) the chain is Lumenal. Residues 65 to 331 (VSAIAHRGGS…SMLEDCAPHF (267 aa)) enclose the GP-PDE domain. Positions 97 and 99 each coordinate Mg(2+). Residue Asn168 is glycosylated (N-linked (GlcNAc...) asparagine). Asp174 provides a ligand contact to Mg(2+). Residues 249–269 (VFVVLDILLDWSMHNVLWYLC) traverse the membrane as a helical segment. The Cytoplasmic portion of the chain corresponds to 270 to 331 (GISAFLMQKD…SMLEDCAPHF (62 aa)).

This sequence belongs to the glycerophosphoryl diester phosphodiesterase family. In terms of assembly, interacts with PRAF2. Interacts with RGS16. It depends on Mg(2+) as a cofactor. In terms of processing, N-glycosylated. Detected in heart, brain, lung, liver, skeletal muscle, kidney, pituitary and testis.

The protein resides in the cell membrane. The protein localises to the cytoplasmic vesicle membrane. It catalyses the reaction sn-glycero-3-phospho-1D-myo-inositol + H2O = myo-inositol + sn-glycerol 3-phosphate + H(+). The catalysed reaction is 1-O-(1Z-octadecenyl)-sn-glycero-3-phospho-(N-5Z,8Z,11Z,14Z-eicosatetraenoyl)-ethanolamine + H2O = 1-O-(1Z-octadecenyl)-sn-glycero-3-phosphate + N-(5Z,8Z,11Z,14Z-eicosatetraenoyl)-ethanolamine + H(+). The enzyme catalyses 1-O-(1Z-octadecenyl)-sn-glycero-3-phospho-(N-9Z-octadecenoyl)-ethanolamine + H2O = 1-O-(1Z-octadecenyl)-sn-glycero-3-phosphate + N-(9Z-octadecenoyl) ethanolamine + H(+). It carries out the reaction 1-O-(1Z-octadecenyl)-sn-glycero-3-phospho-N-hexadecanoyl-ethanolamine + H2O = 1-O-(1Z-octadecenyl)-sn-glycero-3-phosphate + N-hexadecanoylethanolamine + H(+). It catalyses the reaction N-(4Z,7Z,10Z,13Z,16Z,19Z)-docosahexaenoyl-sn-glycero-3-phosphoethanolamine + H2O = N-(4Z,7Z,10Z,13Z,16Z,19Z)-docosahexaenoyl ethanolamine + sn-glycerol 3-phosphate + H(+). The catalysed reaction is N-eicosanoyl-sn-glycero-3-phosphoethanolamine + H2O = N-eicosanoyl ethanolamine + sn-glycerol 3-phosphate + H(+). The enzyme catalyses N-hexadecanoyl-sn-glycero-3-phosphoethanolamine + H2O = N-hexadecanoylethanolamine + sn-glycerol 3-phosphate + H(+). It carries out the reaction N-(9Z-octadecenoyl)-sn-glycero-3-phosphoethanolamine + H2O = N-(9Z-octadecenoyl) ethanolamine + sn-glycerol 3-phosphate + H(+). It catalyses the reaction N-(5Z,8Z,11Z,14Z-eicosatetraenoyl)-sn-glycero-3-phosphoethanolamine + H2O = N-(5Z,8Z,11Z,14Z-eicosatetraenoyl)-ethanolamine + sn-glycerol 3-phosphate + H(+). Its activity is regulated as follows. Inhibited by EDTA, calcium chloride, and zinc chloride. Enhanced by magnesium chloride. Glycerophosphodiester phosphodiesterase activity can be modulated by G-protein signaling pathways. Functionally, hydrolyzes the phosphodiester bond of glycerophosphodiesters such as glycerophosphoinositol (GroPIns) and glycerophosphoethanolamine (GroPEth), to yield a glycerol phosphate and an alcohol. Hydrolyzes glycerophospho-N-acylethanolamines to N-acylethanolamines in the brain and participates in bioactive N-acylethanolamine biosynthesis such as anandamide (an endocannabinoid), N-palmitoylethanolamine (an anti-inflammatory), and N-oleoylethanolamine (an anorexic). In addition, has a lysophospholipase D activity by hydrolyzing N-acyl-lysoplasmenylethanolamine (N-acyl-lysoPlsEt) to N-acylethanolamine. However lysophospholipase D activity is lower than glycerophosphodiester phosphodiesterase activity. Has little or no activity towards glycerophosphocholine. This chain is Glycerophosphodiester phosphodiesterase 1, found in Rattus norvegicus (Rat).